The sequence spans 389 residues: Large ribosomal subunit protein uL3 (389 aa).

Positions 1–36 (MSHRKFEHPRHGSLGFLPRKRSSRHRGKVKSFPKDD) are disordered. Residues 18–31 (PRKRSSRHRGKVKS) are compositionally biased toward basic residues.

This sequence belongs to the universal ribosomal protein uL3 family.

The protein localises to the cytoplasm. In terms of biological role, the L3 protein is a component of the large subunit of cytoplasmic ribosomes. The polypeptide is Large ribosomal subunit protein uL3 (RPL3) (Oryza sativa subsp. japonica (Rice)).